The chain runs to 460 residues: Metal cation symporter ZIP8 (460 aa).

The first 22 residues, 1-22 (MAPGRAVAGLLLLAAAGLGGVA), serve as a signal peptide directing secretion. Topologically, residues 23-132 (EGPGLAFSED…PSHSEVWGYG (110 aa)) are extracellular. 2 N-linked (GlcNAc...) asparagine glycosylation sites follow: Asn-40 and Asn-88. A helical transmembrane segment spans residues 133-153 (FLSVTIINLASLLGLILTPLI). Over 154–160 (KKSYFPK) the chain is Cytoplasmic. A helical membrane pass occupies residues 161 to 181 (ILTFFVGLAIGTLFSNAIFQL). The Extracellular segment spans residues 182-191 (IPEAFGFDPK). The chain crosses the membrane as a helical span at residues 192–212 (VDSYVEKAVAVFGGFYLLFFF). The Cytoplasmic segment spans residues 213–365 (ERMLKMLLKT…LNAGMSTRQA (153 aa)). The XEXPHE-motif signature appears at 343 to 348 (EEFPHE). The helical transmembrane segment at 366–386 (LLFNFLSACSCYVGLAFGILV) threads the bilayer. Over 387–388 (GN) the chain is Extracellular. The helical transmembrane segment at 389–409 (NFAPNIIFALAGGMFLYISLA) threads the bilayer. Residues 410-429 (DMFPEMNDMLREKVTGRKTD) are Cytoplasmic-facing. A helical membrane pass occupies residues 430 to 450 (FTFFMIQNAGMLTGFTAILLI). The Extracellular portion of the chain corresponds to 451-460 (TLYAGEIELE).

It belongs to the ZIP transporter (TC 2.A.5) family. Homodimer. In terms of processing, N-glycosylated. N-glycosylation is not required for proper iron and zinc transport. In terms of tissue distribution, ubiquitously expressed. Expressed in thymus, placenta, lung, liver, pancreas, salivary gland and, to a lower extent, in spleen, testis, ovary, small intestine, colon, leukocyte, heart. Highest expression is observed in pancreas. Expressed by macrophages (at protein level). Expressed by microvascular capillary endothelial cells that constitute the blood-brain barrier (at protein level).

Its subcellular location is the cell membrane. It localises to the lysosome membrane. It is found in the apical cell membrane. The protein resides in the basolateral cell membrane. It catalyses the reaction Zn(2+)(out) + 2 hydrogencarbonate(out) = Zn(2+)(in) + 2 hydrogencarbonate(in). It carries out the reaction selenite(out) + Zn(2+)(out) + hydrogencarbonate(out) = selenite(in) + Zn(2+)(in) + hydrogencarbonate(in). The enzyme catalyses Mn(2+)(out) + 2 hydrogencarbonate(out) = Mn(2+)(in) + 2 hydrogencarbonate(in). The catalysed reaction is Fe(2+)(out) + 2 hydrogencarbonate(out) = Fe(2+)(in) + 2 hydrogencarbonate(in). It catalyses the reaction Cd(2+)(out) + 2 hydrogencarbonate(out) = Cd(2+)(in) + 2 hydrogencarbonate(in). It carries out the reaction Co(2+)(out) + 2 hydrogencarbonate(out) = Co(2+)(in) + 2 hydrogencarbonate(in). Functionally, electroneutral divalent metal cation:bicarbonate symporter of the plasma membrane mediating the cellular uptake of zinc and manganese, two divalent metal cations important for development, tissue homeostasis and immunity. Transports an electroneutral complex composed of a divalent metal cation and two bicarbonate anions or alternatively a bicarbonate and a selenite anion. Thereby, it also contributes to the cellular uptake of selenium, an essential trace metal and micronutrient. Also imports cadmium a non-essential metal which is cytotoxic and carcinogenic. May also transport iron and cobalt through membranes. Through zinc import, indirectly regulates the metal-dependent transcription factor MTF1 and the expression of some metalloproteases involved in cartilage catabolism and also probably heart development. Also indirectly regulates the expression of proteins involved in cell morphology and cytoskeleton organization. Indirectly controls innate immune function and inflammatory response by regulating zinc cellular uptake which in turn modulates the expression of genes specific of these processes. Protects, for instance, cells from injury and death at the onset of inflammation. By regulating zinc influx into monocytes also directly modulates their adhesion to endothelial cells and arteries. Reclaims manganese from the bile at the apical membrane of hepatocytes, thereby regulating the activity of the manganese-dependent enzymes through the systemic levels of the nutrient. Also participates in manganese reabsorption in the proximal tubule of the kidney. By mediating the extracellular uptake of manganese by cells of the blood-brain barrier, may also play a role in the transport of the micronutrient to the brain. With manganese cellular uptake also participates in mitochondrial proper function. Finally, also probably functions intracellularly, translocating zinc from lysosome to cytosol to indirectly enhance the expression of specific genes during TCR-mediated T cell activation. This chain is Metal cation symporter ZIP8, found in Homo sapiens (Human).